Reading from the N-terminus, the 89-residue chain is Putative regulatory protein RBAM_015500 (89 aa).

The protein belongs to the RemA family.

In Bacillus velezensis (strain DSM 23117 / BGSC 10A6 / LMG 26770 / FZB42) (Bacillus amyloliquefaciens subsp. plantarum), this protein is Putative regulatory protein RBAM_015500.